The following is a 343-amino-acid chain: Anthranilate phosphoribosyltransferase (343 aa).

5-phospho-alpha-D-ribose 1-diphosphate contacts are provided by residues glycine 84, 87-88, threonine 92, 94-97, 112-120, and serine 124; these read GD, NIST, and KHGNRGVSS. Position 84 (glycine 84) interacts with anthranilate. Serine 96 serves as a coordination point for Mg(2+). Asparagine 115 is an anthranilate binding site. Residue arginine 170 participates in anthranilate binding. The Mg(2+) site is built by aspartate 229 and glutamate 230.

The protein belongs to the anthranilate phosphoribosyltransferase family. As to quaternary structure, homodimer. Mg(2+) is required as a cofactor.

The catalysed reaction is N-(5-phospho-beta-D-ribosyl)anthranilate + diphosphate = 5-phospho-alpha-D-ribose 1-diphosphate + anthranilate. It participates in amino-acid biosynthesis; L-tryptophan biosynthesis; L-tryptophan from chorismate: step 2/5. Its function is as follows. Catalyzes the transfer of the phosphoribosyl group of 5-phosphorylribose-1-pyrophosphate (PRPP) to anthranilate to yield N-(5'-phosphoribosyl)-anthranilate (PRA). The protein is Anthranilate phosphoribosyltransferase of Burkholderia orbicola (strain AU 1054).